A 117-amino-acid polypeptide reads, in one-letter code: Translation initiation factor 1A (117 aa).

The region spanning 17-92 (IRVPLPDRSK…ERGDIVYRYT (76 aa)) is the S1-like domain.

The protein belongs to the eIF-1A family.

Seems to be required for maximal rate of protein biosynthesis. Enhances ribosome dissociation into subunits and stabilizes the binding of the initiator Met-tRNA(I) to 40 S ribosomal subunits. The sequence is that of Translation initiation factor 1A from Thermococcus kodakarensis (strain ATCC BAA-918 / JCM 12380 / KOD1) (Pyrococcus kodakaraensis (strain KOD1)).